Reading from the N-terminus, the 179-residue chain is Peptide deformylase 2 (179 aa).

Residues C102 and H144 each contribute to the Fe cation site. Residue E145 is part of the active site. H148 contributes to the Fe cation binding site.

It belongs to the polypeptide deformylase family. It depends on Fe(2+) as a cofactor.

The catalysed reaction is N-terminal N-formyl-L-methionyl-[peptide] + H2O = N-terminal L-methionyl-[peptide] + formate. In terms of biological role, removes the formyl group from the N-terminal Met of newly synthesized proteins. Requires at least a dipeptide for an efficient rate of reaction. N-terminal L-methionine is a prerequisite for activity but the enzyme has broad specificity at other positions. In Nostoc sp. (strain PCC 7120 / SAG 25.82 / UTEX 2576), this protein is Peptide deformylase 2.